Reading from the N-terminus, the 380-residue chain is Cytochrome b (380 aa).

Helical transmembrane passes span 34–54 (FGWL…FLAM), 78–99 (WLLR…YFHI), 114–134 (WNIG…GYVL), and 179–199 (FFTF…IHLL). His84 and His98 together coordinate heme b. His183 and His197 together coordinate heme b. His202 contacts a ubiquinone. 4 helical membrane passes run 227–247 (FKDL…STFA), 289–309 (LGGV…PIIH), 321–341 (AAKA…WIGG), and 348–368 (FISI…LIIP).

It belongs to the cytochrome b family. The cytochrome bc1 complex contains 3 respiratory subunits (MT-CYB, CYC1 and UQCRFS1), 2 core proteins (UQCRC1 and UQCRC2) and probably 6 low-molecular weight proteins. Requires heme b as cofactor.

The protein localises to the mitochondrion inner membrane. Functionally, component of the ubiquinol-cytochrome c reductase complex (complex III or cytochrome b-c1 complex) that is part of the mitochondrial respiratory chain. The b-c1 complex mediates electron transfer from ubiquinol to cytochrome c. Contributes to the generation of a proton gradient across the mitochondrial membrane that is then used for ATP synthesis. In Rana dybowskii (Dybovsky's frog), this protein is Cytochrome b (mt-cyb).